A 428-amino-acid chain; its full sequence is Spliceosome RNA helicase DDX39B (428 aa).

Positions 1–19 (MAENDVDNELLDYEEDEVE) are enriched in acidic residues. The interval 1–35 (MAENDVDNELLDYEEDEVENAAGGDGSEAPPKKDV) is disordered. Positions 45-73 (SGFRDFLLKPELLRAIVDCGFEHPSEVQH) match the Q motif motif. A Helicase ATP-binding domain is found at 76 to 249 (IPQAILGMDV…RKFMQDPMEI (174 aa)). 89–96 (AKSGMGKT) is an ATP binding site. Residues 196 to 199 (DECD) carry the DECD box motif. The Helicase C-terminal domain occupies 261–422 (GLQQYYVKLK…ELPDEIDISS (162 aa)).

It belongs to the DEAD box helicase family. DECD subfamily. As to quaternary structure, component of the transcription/export (TREX) complex at least composed of ALYREF/THOC4, DDX39B, SARNP/CIP29, CHTOP and the THO subcomplex.

The protein resides in the nucleus. The protein localises to the nucleus speckle. The catalysed reaction is ATP + H2O = ADP + phosphate + H(+). Functionally, involved in nuclear export of spliced and unspliced mRNA. Component of the TREX complex which is thought to couple mRNA transcription, processing and nuclear export, and specifically associates with spliced mRNA and not with unspliced pre-mRNA. The TREX complex is recruited to spliced mRNAs by a transcription-independent mechanism, binds to mRNA upstream of the exon-junction complex (EJC) and is recruited in a splicing- and cap-dependent manner to a region near the 5' end of the mRNA where it functions in mRNA export to the cytoplasm via the TAP/NXF1 pathway. Involved in transcription elongation and genome stability. Splice factor that is required for the first ATP-dependent step in spliceosome assembly and for the interaction of U2 snRNP with the branchpoint. Has both RNA-stimulated ATP binding/hydrolysis activity and ATP-dependent RNA unwinding activity. Even with the stimulation of RNA, the ATPase activity is weak. Can only hydrolyze ATP but not other NTPs. The RNA stimulation of ATPase activity does not have a strong preference for the sequence and length of the RNA. However, ssRNA stimulates the ATPase activity much more strongly than dsRNA. Can unwind 5' or 3' overhangs or blunt end RNA duplexes in vitro. The ATPase and helicase activities are not influenced by U2AF2; the effect of ALYREF/THOC4 is reported conflictingly. The chain is Spliceosome RNA helicase DDX39B (DDX39B) from Gallus gallus (Chicken).